The sequence spans 283 residues: tRNA pseudouridine synthase A (283 aa).

Catalysis depends on Asp52, which acts as the Nucleophile. Tyr148 contributes to the substrate binding site.

It belongs to the tRNA pseudouridine synthase TruA family. As to quaternary structure, homodimer.

It catalyses the reaction uridine(38/39/40) in tRNA = pseudouridine(38/39/40) in tRNA. Formation of pseudouridine at positions 38, 39 and 40 in the anticodon stem and loop of transfer RNAs. This is tRNA pseudouridine synthase A from Orientia tsutsugamushi (strain Ikeda) (Rickettsia tsutsugamushi).